Reading from the N-terminus, the 444-residue chain is Homogentisate 1,2-dioxygenase (444 aa).

H298 acts as the Proton acceptor in catalysis. The Fe cation site is built by H341 and E347. The homogentisate site is built by Y356 and H377. H377 contributes to the Fe cation binding site.

This sequence belongs to the homogentisate dioxygenase family. In terms of assembly, hexamer; dimer of trimers. Fe cation is required as a cofactor.

The catalysed reaction is homogentisate + O2 = 4-maleylacetoacetate + H(+). It functions in the pathway amino-acid degradation; L-phenylalanine degradation; acetoacetate and fumarate from L-phenylalanine: step 4/6. In terms of biological role, involved in the catabolism of homogentisate (2,5-dihydroxyphenylacetate or 2,5-OH-PhAc), a central intermediate in the degradation of phenylalanine and tyrosine. Catalyzes the oxidative ring cleavage of the aromatic ring of homogentisate to yield maleylacetoacetate. This is Homogentisate 1,2-dioxygenase from Burkholderia orbicola (strain AU 1054).